We begin with the raw amino-acid sequence, 151 residues long: uncharacterized protein (151 aa).

A coiled-coil region spans residues 35-147 (GIFENERQKL…RETLQESLED (113 aa)).

This is an uncharacterized protein from Helicobacter hepaticus (strain ATCC 51449 / 3B1).